A 220-amino-acid chain; its full sequence is Large ribosomal subunit protein bL25 (220 aa).

Residues 186-199 show a composition bias toward acidic residues; the sequence is ELEDEDEDEDEVAA. Residues 186–220 are disordered; that stretch reads ELEDEDEDEDEVAADEVPATEVDDQAAVKEGEGKE. Basic and acidic residues predominate over residues 211 to 220; sequence AAVKEGEGKE.

It belongs to the bacterial ribosomal protein bL25 family. CTC subfamily. As to quaternary structure, part of the 50S ribosomal subunit; part of the 5S rRNA/L5/L18/L25 subcomplex. Contacts the 5S rRNA. Binds to the 5S rRNA independently of L5 and L18.

Functionally, this is one of the proteins that binds to the 5S RNA in the ribosome where it forms part of the central protuberance. The protein is Large ribosomal subunit protein bL25 of Christiangramia forsetii (strain DSM 17595 / CGMCC 1.15422 / KT0803) (Gramella forsetii).